A 1175-amino-acid chain; its full sequence is Chromosome partition protein Smc (1175 aa).

ATP is bound at residue 32-39; it reads PNGCGKSN. A coiled-coil region spans residues 170 to 504; that stretch reads VSKYKERRRE…ALKALQEKVK (335 aa). The 102-residue stretch at 524-625 folds into the SMC hinge domain; that stretch reads LWSRIAIEPG…YTAPTLEEAL (102 aa). Coiled-coil stretches lie at residues 684 to 918 and 944 to 1022; these read DESR…FQLK and SQSI…ELLS. The tract at residues 807–849 is disordered; it reads RQAQEATFSRRSLEARRGELSRTIETASQQARSLADEQQRAQD. Residues 817–828 are compositionally biased toward basic and acidic residues; that stretch reads RSLEARRGELSR. A compositionally biased stretch (polar residues) spans 829–838; that stretch reads TIETASQQAR. Positions 840-849 are enriched in basic and acidic residues; it reads LADEQQRAQD.

This sequence belongs to the SMC family. In terms of assembly, homodimer.

It is found in the cytoplasm. Its function is as follows. Required for chromosome condensation and partitioning. The chain is Chromosome partition protein Smc from Delftia acidovorans (strain DSM 14801 / SPH-1).